The following is a 585-amino-acid chain: Sodium/calcium exchanger NCL (585 aa).

5 helical membrane passes run valine 83–glycine 103, leucine 106–alanine 126, valine 149–glycine 169, isoleucine 212–threonine 232, and valine 239–phenylalanine 259. EF-hand domains follow at residues proline 299–glutamate 334 and aspartate 339–glutamine 374. Residues aspartate 312, asparagine 314, aspartate 316, histidine 318, glutamate 323, aspartate 352, aspartate 356, glutamine 358, and glutamate 363 each coordinate Ca(2+). Transmembrane regions (helical) follow at residues tryptophan 427–alanine 447 and phenylalanine 457–threonine 477. Asparagine 478 carries N-linked (GlcNAc...) asparagine glycosylation. 3 helical membrane passes run cysteine 505–valine 525, phenylalanine 532–phenylalanine 552, and leucine 558–leucine 578.

This sequence belongs to the Ca(2+):cation antiporter (CaCA) (TC 2.A.19) family. Expressed in roots, leaves, stems, petals, stamens, ovules and siliques.

It localises to the cell membrane. The protein resides in the vacuole membrane. In terms of biological role, possesses sodium/calcium exchanger (NCX) activity when expressed in a heterologous mammalian CHO-K1 cell system. Does not possess cation/proton exchanger (CAX) or sodium/proton (NHX) activity when expressed in a heterologous yeast cell system. Has the ability to bind calcium in vitro. Participates in the maintenance of calcium homeostasis. May play a role in auxin response, diurnal rhythm and flowering time. Involved in salt stress response. This is Sodium/calcium exchanger NCL from Arabidopsis thaliana (Mouse-ear cress).